Reading from the N-terminus, the 121-residue chain is Large ribosomal subunit protein bL19 (121 aa).

The protein belongs to the bacterial ribosomal protein bL19 family.

Its function is as follows. This protein is located at the 30S-50S ribosomal subunit interface and may play a role in the structure and function of the aminoacyl-tRNA binding site. The sequence is that of Large ribosomal subunit protein bL19 from Borrelia garinii subsp. bavariensis (strain ATCC BAA-2496 / DSM 23469 / PBi) (Borreliella bavariensis).